The following is a 572-amino-acid chain: Arginine--tRNA ligase (572 aa).

The 'HIGH' region signature appears at 122-132 (PNLAKEMHVGH).

It belongs to the class-I aminoacyl-tRNA synthetase family. In terms of assembly, monomer.

It localises to the cytoplasm. The enzyme catalyses tRNA(Arg) + L-arginine + ATP = L-arginyl-tRNA(Arg) + AMP + diphosphate. In Neisseria gonorrhoeae (strain ATCC 700825 / FA 1090), this protein is Arginine--tRNA ligase.